A 218-amino-acid chain; its full sequence is Large ribosomal subunit protein uL3 (218 aa).

This sequence belongs to the universal ribosomal protein uL3 family. Part of the 50S ribosomal subunit. Forms a cluster with proteins L14 and L19.

One of the primary rRNA binding proteins, it binds directly near the 3'-end of the 23S rRNA, where it nucleates assembly of the 50S subunit. This Corynebacterium glutamicum (strain R) protein is Large ribosomal subunit protein uL3.